The following is a 365-amino-acid chain: Chorismate synthase (365 aa).

Residues Arg48 and Arg54 each coordinate NADP(+). FMN contacts are provided by residues 125–127 (RSS), 238–239 (NA), Gly278, 293–297 (KPTSS), and Arg319.

The protein belongs to the chorismate synthase family. As to quaternary structure, homotetramer. FMNH2 is required as a cofactor.

It carries out the reaction 5-O-(1-carboxyvinyl)-3-phosphoshikimate = chorismate + phosphate. It participates in metabolic intermediate biosynthesis; chorismate biosynthesis; chorismate from D-erythrose 4-phosphate and phosphoenolpyruvate: step 7/7. Catalyzes the anti-1,4-elimination of the C-3 phosphate and the C-6 proR hydrogen from 5-enolpyruvylshikimate-3-phosphate (EPSP) to yield chorismate, which is the branch point compound that serves as the starting substrate for the three terminal pathways of aromatic amino acid biosynthesis. This reaction introduces a second double bond into the aromatic ring system. The chain is Chorismate synthase from Janthinobacterium sp. (strain Marseille) (Minibacterium massiliensis).